The following is a 372-amino-acid chain: Chaperone protein DnaJ (372 aa).

Residues 5–70 (DYYDLLEVGR…EKRAGYDRYG (66 aa)) enclose the J domain. The CR-type zinc finger occupies 134–212 (GIQAPIHYVT…CGGSGRRRDE (79 aa)). Positions 147, 150, 164, 167, 186, 189, 200, and 203 each coordinate Zn(2+). 4 CXXCXGXG motif repeats span residues 147 to 154 (CDTCQGTG), 164 to 171 (CHTCQGSG), 186 to 193 (CTTCYGEG), and 200 to 207 (CKKCGGSG).

This sequence belongs to the DnaJ family. In terms of assembly, homodimer. Zn(2+) serves as cofactor.

It localises to the cytoplasm. Its function is as follows. Participates actively in the response to hyperosmotic and heat shock by preventing the aggregation of stress-denatured proteins and by disaggregating proteins, also in an autonomous, DnaK-independent fashion. Unfolded proteins bind initially to DnaJ; upon interaction with the DnaJ-bound protein, DnaK hydrolyzes its bound ATP, resulting in the formation of a stable complex. GrpE releases ADP from DnaK; ATP binding to DnaK triggers the release of the substrate protein, thus completing the reaction cycle. Several rounds of ATP-dependent interactions between DnaJ, DnaK and GrpE are required for fully efficient folding. Also involved, together with DnaK and GrpE, in the DNA replication of plasmids through activation of initiation proteins. The chain is Chaperone protein DnaJ from Wolbachia pipientis wMel.